The following is a 335-amino-acid chain: MMSNIHTNISEWMKMSEETPVIISSRIRLARNLENHVHPLMFPSEQEGYRVINEVQDALSNLTLNRLDTMDQQSKMKLVAKHLVSPELVKQPASAVMLNDDESVSVMINEEDHIRIQALGTDLSLKDLYQRASKIDDELDKALDISYDEHLGYLTTCPTNIGTGMRASVMLHLPGLSIMKRMNRIAQTINRFGFTIRGIYGEGSQVYGHIYQVSNQLTLGKTEEDIIDNLTEVVNQIINEEKQIRERLDKHNSVETLDRVYRSLGVLQNSRIISMEEASYRLSEVKLGIDLNYILLENFKFNELMVAIQSPFLIDDDDNRTVNEKRADLLREHIK.

In terms of domain architecture, Phosphagen kinase C-terminal spans 21 to 244 (VIISSRIRLA…NQIINEEKQI (224 aa)). ATP-binding positions include 24–28 (SSRIR), His82, Arg115, 166–170 (RASVM), and 197–202 (RGIYGE).

It belongs to the ATP:guanido phosphotransferase family.

The catalysed reaction is L-arginyl-[protein] + ATP = N(omega)-phospho-L-arginyl-[protein] + ADP + H(+). Functionally, catalyzes the specific phosphorylation of arginine residues in proteins. The protein is Protein-arginine kinase of Staphylococcus epidermidis (strain ATCC 12228 / FDA PCI 1200).